Reading from the N-terminus, the 687-residue chain is Glycine--tRNA ligase beta subunit (687 aa).

Belongs to the class-II aminoacyl-tRNA synthetase family. In terms of assembly, tetramer of two alpha and two beta subunits.

It localises to the cytoplasm. It catalyses the reaction tRNA(Gly) + glycine + ATP = glycyl-tRNA(Gly) + AMP + diphosphate. The sequence is that of Glycine--tRNA ligase beta subunit from Neisseria meningitidis serogroup C / serotype 2a (strain ATCC 700532 / DSM 15464 / FAM18).